A 184-amino-acid polypeptide reads, in one-letter code: Small ribosomal subunit protein eS8 (184 aa).

Residues Met1–Lys23 are disordered. Basic residues predominate over residues Ser7–Lys23.

This sequence belongs to the eukaryotic ribosomal protein eS8 family.

The sequence is that of Small ribosomal subunit protein eS8 (RPS8) from Theileria annulata.